The chain runs to 198 residues: FMN-dependent NADH:quinone oxidoreductase (198 aa).

FMN is bound by residues 92–95 (MWNL) and 136–139 (SRGG).

This sequence belongs to the azoreductase type 1 family. Homodimer. Requires FMN as cofactor.

The catalysed reaction is 2 a quinone + NADH + H(+) = 2 a 1,4-benzosemiquinone + NAD(+). The enzyme catalyses N,N-dimethyl-1,4-phenylenediamine + anthranilate + 2 NAD(+) = 2-(4-dimethylaminophenyl)diazenylbenzoate + 2 NADH + 2 H(+). Its function is as follows. Quinone reductase that provides resistance to thiol-specific stress caused by electrophilic quinones. In terms of biological role, also exhibits azoreductase activity. Catalyzes the reductive cleavage of the azo bond in aromatic azo compounds to the corresponding amines. The protein is FMN-dependent NADH:quinone oxidoreductase of Clostridium perfringens (strain SM101 / Type A).